The following is a 525-amino-acid chain: GMP synthase [glutamine-hydrolyzing] (525 aa).

The Glutamine amidotransferase type-1 domain maps to 9 to 207 (RILILDFGSQ…VRDICQCEAL (199 aa)). The active-site Nucleophile is the Cys-86. Catalysis depends on residues His-181 and Glu-183. A GMPS ATP-PPase domain is found at 208 to 400 (WTPAKIIDDA…LGLPYDMLYR (193 aa)). ATP is bound at residue 235 to 241 (SGGVDSS).

As to quaternary structure, homodimer.

The catalysed reaction is XMP + L-glutamine + ATP + H2O = GMP + L-glutamate + AMP + diphosphate + 2 H(+). Its pathway is purine metabolism; GMP biosynthesis; GMP from XMP (L-Gln route): step 1/1. In terms of biological role, catalyzes the synthesis of GMP from XMP. This is GMP synthase [glutamine-hydrolyzing] from Salmonella typhi.